A 273-amino-acid chain; its full sequence is Putative pyruvate, phosphate dikinase regulatory protein (273 aa).

Residue 153–160 (GVSRTSKT) participates in ADP binding.

This sequence belongs to the pyruvate, phosphate/water dikinase regulatory protein family. PDRP subfamily.

It carries out the reaction N(tele)-phospho-L-histidyl/L-threonyl-[pyruvate, phosphate dikinase] + ADP = N(tele)-phospho-L-histidyl/O-phospho-L-threonyl-[pyruvate, phosphate dikinase] + AMP + H(+). The enzyme catalyses N(tele)-phospho-L-histidyl/O-phospho-L-threonyl-[pyruvate, phosphate dikinase] + phosphate + H(+) = N(tele)-phospho-L-histidyl/L-threonyl-[pyruvate, phosphate dikinase] + diphosphate. In terms of biological role, bifunctional serine/threonine kinase and phosphorylase involved in the regulation of the pyruvate, phosphate dikinase (PPDK) by catalyzing its phosphorylation/dephosphorylation. The protein is Putative pyruvate, phosphate dikinase regulatory protein of Sinorhizobium fredii (strain NBRC 101917 / NGR234).